The following is a 212-amino-acid chain: Octanoyltransferase (212 aa).

The BPL/LPL catalytic domain occupies 33-212 (GTAPELVWLL…ATFPEVFGAD (180 aa)). Substrate is bound by residues 72-79 (RGGQYTYH), 144-146 (AIG), and 157-159 (GIA). Residue cysteine 175 is the Acyl-thioester intermediate of the active site.

The protein belongs to the LipB family.

The protein localises to the cytoplasm. The enzyme catalyses octanoyl-[ACP] + L-lysyl-[protein] = N(6)-octanoyl-L-lysyl-[protein] + holo-[ACP] + H(+). Its pathway is protein modification; protein lipoylation via endogenous pathway; protein N(6)-(lipoyl)lysine from octanoyl-[acyl-carrier-protein]: step 1/2. Its function is as follows. Catalyzes the transfer of endogenously produced octanoic acid from octanoyl-acyl-carrier-protein onto the lipoyl domains of lipoate-dependent enzymes. Lipoyl-ACP can also act as a substrate although octanoyl-ACP is likely to be the physiological substrate. This chain is Octanoyltransferase, found in Paramagnetospirillum magneticum (strain ATCC 700264 / AMB-1) (Magnetospirillum magneticum).